The primary structure comprises 300 residues: GTPase Era (300 aa).

The 169-residue stretch at 7 to 175 (YCGFIAIVGR…EKFVRESLKE (169 aa)) folds into the Era-type G domain. The segment at 15 to 22 (GRPNVGKS) is G1. 15–22 (GRPNVGKS) contacts GTP. Residues 41–45 (QTTRH) form a G2 region. Positions 62-65 (DTPG) are G3. GTP-binding positions include 62–66 (DTPGL) and 124–127 (NKVD). The tract at residues 124–127 (NKVD) is G4. The G5 stretch occupies residues 154–156 (ISA). Positions 206–283 (MGEELPYSVT…HLELWVKVKA (78 aa)) constitute a KH type-2 domain.

The protein belongs to the TRAFAC class TrmE-Era-EngA-EngB-Septin-like GTPase superfamily. Era GTPase family. Monomer.

Its subcellular location is the cytoplasm. It localises to the cell inner membrane. Its function is as follows. An essential GTPase that binds both GDP and GTP, with rapid nucleotide exchange. Plays a role in 16S rRNA processing and 30S ribosomal subunit biogenesis and possibly also in cell cycle regulation and energy metabolism. This Glaesserella parasuis serovar 5 (strain SH0165) (Haemophilus parasuis) protein is GTPase Era.